We begin with the raw amino-acid sequence, 199 residues long: Protein GrpE (199 aa).

A disordered region spans residues 1 to 50; sequence MAKKSTRTTPEDSQASTTDSAATSTASEATQAATSATDDQAEQTTAVDPT. Positions 11-46 are enriched in low complexity; sequence EDSQASTTDSAATSTASEATQAATSATDDQAEQTTA.

This sequence belongs to the GrpE family. As to quaternary structure, homodimer.

The protein localises to the cytoplasm. Functionally, participates actively in the response to hyperosmotic and heat shock by preventing the aggregation of stress-denatured proteins, in association with DnaK and GrpE. It is the nucleotide exchange factor for DnaK and may function as a thermosensor. Unfolded proteins bind initially to DnaJ; upon interaction with the DnaJ-bound protein, DnaK hydrolyzes its bound ATP, resulting in the formation of a stable complex. GrpE releases ADP from DnaK; ATP binding to DnaK triggers the release of the substrate protein, thus completing the reaction cycle. Several rounds of ATP-dependent interactions between DnaJ, DnaK and GrpE are required for fully efficient folding. The protein is Protein GrpE of Lactiplantibacillus plantarum (strain ATCC BAA-793 / NCIMB 8826 / WCFS1) (Lactobacillus plantarum).